A 320-amino-acid chain; its full sequence is Transcription factor NAI1 (320 aa).

The disordered stretch occupies residues 53–105; sequence TKQMKTNNNMNSTSSSPSSSSSSGSRTSQVISFGSPDTKTNPVETSLNFSNQV. The span at 58–80 shows a compositional bias: low complexity; that stretch reads TNNNMNSTSSSPSSSSSSGSRTS. Residues 81–105 are compositionally biased toward polar residues; it reads QVISFGSPDTKTNPVETSLNFSNQV. Residues 128–177 form the bHLH domain; that stretch reads HLLKEHVLAERKRRQKLNERLIALSALLPGLKKTDKATVLEDAIKHLKQL.

Homodimer. Expressed constitutively in roots, leaves, stems, and flowers.

It is found in the nucleus. Functionally, transcription activator that regulates the expression of at least NAI2, PYK10 and PBP1. Required for and mediates the formation of endoplasmic reticulum bodies (ER bodies). Involved in the symbiotic interactions with the endophytes of the Sebacinaceae fungus family, such as Piriformospora indica and Sebacina. This Arabidopsis thaliana (Mouse-ear cress) protein is Transcription factor NAI1 (NAI1).